The sequence spans 44 residues: uncharacterized protein (44 aa).

The interval 22–44 (LNSAPAFKSSQNTSTQAKPTFSN) is disordered.

This is an uncharacterized protein from Dictyostelium discoideum (Social amoeba).